Here is a 127-residue protein sequence, read N- to C-terminus: Glycine cleavage system H protein (127 aa).

One can recognise a Lipoyl-binding domain in the interval Glu22–Glu104. Residue Lys63 is modified to N6-lipoyllysine.

It belongs to the GcvH family. As to quaternary structure, the glycine cleavage system is composed of four proteins: P, T, L and H. It depends on (R)-lipoate as a cofactor.

Functionally, the glycine cleavage system catalyzes the degradation of glycine. The H protein shuttles the methylamine group of glycine from the P protein to the T protein. Is also involved in protein lipoylation via its role as an octanoyl/lipoyl carrier protein intermediate. This Bacillus cereus (strain B4264) protein is Glycine cleavage system H protein.